The chain runs to 178 residues: Platelet inhibitor triplatin-2 (178 aa).

A signal peptide spans 1–18; sequence MKMIISLTFLGILMLAFA. Disulfide bonds link Cys-25–Cys-134, Cys-60–Cys-178, and Cys-90–Cys-106.

It belongs to the calycin superfamily. Triabin family. As to expression, expressed in salivary glands.

Its subcellular location is the secreted. In terms of biological role, inhibits platelet aggregation and vasoconstriction through binding to distinct eicosanoids involved in inflammation (acts as a scavenger), and has a role in inhibiting host innate immunity by impairing platelet-assisted formation of neutrophil extracellular traps (NETs). Inhibits platelet aggregation by collagen, and low doses of thromboxane A2 mimetic (TXA2 mimetic), and arachidonic acid (AA) without affecting aggregation induced by ADP, convulxin (GP6 agonist), and PMA. Binds to TXA2, TXB2, prostaglandine H2 mimetic (PGH2 mimetic), PGJ2, and PGF2alpha. Binding is not observed to leukotrienes, AA, and biogenic amines (PGE1, 5(S)-HETE, 12(S)-HETE, 20-HETE, norepinephrine, epinephrine, serotonin, LTC4 and ADP). Induces relaxation of aorta rat previously contracted with TXA2 mimetic. Moreover, it also impairs platelet-assisted formation of neutrophil extracellular traps (NETs). NETs are web-like structures of DNA and proteins that play an important role in killing of pathogens. In addition, NETs are implicated in thrombus formation. In vivo, this protein exhibits antithrombotic activity in two distinct mice models that are highly dependent on platelets. It is noteworthy that it inhibits thrombosis without promoting excessive bleeding. This is Platelet inhibitor triplatin-2 from Triatoma infestans (Assassin bug).